The chain runs to 354 residues: Probable DNA repair protein RAD51 homolog 4 (354 aa).

ATP is bound at residue 115–122 (GNTSCGKT).

This sequence belongs to the RecA family. RAD51 subfamily.

The protein resides in the nucleus. Functionally, involved in the homologous recombination repair (HRR) pathway of double-stranded DNA breaks arising during DNA replication or induced by DNA-damaging agents. The chain is Probable DNA repair protein RAD51 homolog 4 (rad51d) from Dictyostelium discoideum (Social amoeba).